The chain runs to 60 residues: Large ribosomal subunit protein uL30 (60 aa).

The protein belongs to the universal ribosomal protein uL30 family. As to quaternary structure, part of the 50S ribosomal subunit.

This Streptococcus thermophilus (strain CNRZ 1066) protein is Large ribosomal subunit protein uL30.